Here is a 235-residue protein sequence, read N- to C-terminus: Pyridoxine/pyridoxamine 5'-phosphate oxidase (235 aa).

Residues 30-33 and Lys88 each bind substrate; that span reads RQEY. Residues 83–88, 98–99, Arg104, Lys105, and Gln127 each bind FMN; these read RTVLLK and YT. Residues Tyr145, Arg149, and Ser153 each contribute to the substrate site. Residues 162 to 163 and Trp207 each bind FMN; that span reads QS. 213-215 serves as a coordination point for substrate; that stretch reads RLH. Arg217 serves as a coordination point for FMN.

The protein belongs to the pyridoxamine 5'-phosphate oxidase family. As to quaternary structure, homodimer. The cofactor is FMN.

The catalysed reaction is pyridoxamine 5'-phosphate + O2 + H2O = pyridoxal 5'-phosphate + H2O2 + NH4(+). It carries out the reaction pyridoxine 5'-phosphate + O2 = pyridoxal 5'-phosphate + H2O2. Its pathway is cofactor metabolism; pyridoxal 5'-phosphate salvage; pyridoxal 5'-phosphate from pyridoxamine 5'-phosphate: step 1/1. The protein operates within cofactor metabolism; pyridoxal 5'-phosphate salvage; pyridoxal 5'-phosphate from pyridoxine 5'-phosphate: step 1/1. Catalyzes the oxidation of either pyridoxine 5'-phosphate (PNP) or pyridoxamine 5'-phosphate (PMP) into pyridoxal 5'-phosphate (PLP). The chain is Pyridoxine/pyridoxamine 5'-phosphate oxidase from Bacteroides fragilis (strain YCH46).